The following is a 183-amino-acid chain: UPF0134 protein MPN_100 (183 aa).

This sequence belongs to the UPF0134 family.

In Mycoplasma pneumoniae (strain ATCC 29342 / M129 / Subtype 1) (Mycoplasmoides pneumoniae), this protein is UPF0134 protein MPN_100.